The chain runs to 318 residues: Olfactory receptor 13C5 (318 aa).

The Extracellular segment spans residues 1-25; it reads MEWENHTILVEFFLKGLSGHPRLEL. Asparagine 5 carries an N-linked (GlcNAc...) asparagine glycan. A helical membrane pass occupies residues 26–46; that stretch reads LFFVLIFIMYVVILLGNGTLI. Over 47 to 54 the chain is Cytoplasmic; sequence LISILDPH. Residues 55–75 form a helical membrane-spanning segment; sequence LHTPMYFFLGNLSFLDICYTT. Residues 76 to 99 are Extracellular-facing; it reads TSIPSTLVSFLSERKTISLSGCAV. Cysteine 97 and cysteine 189 are joined by a disulfide. The helical transmembrane segment at 100-120 threads the bilayer; sequence QMFLSLAMGTTECVLLGVMAF. At 121–139 the chain is on the cytoplasmic side; it reads DRYVAICNPLRYPIIMSKD. The helical transmembrane segment at 140–160 threads the bilayer; it reads AYVPMAAGSWIIGAVNSAVQT. At 161-197 the chain is on the extracellular side; sequence VFVVQLPFCRNNIINHFTCEILAVMKLACADISGNEF. Residues 198 to 217 form a helical membrane-spanning segment; that stretch reads ILLVTTTLFLLTPLLLIIVS. Over 218–237 the chain is Cytoplasmic; sequence YTLIILSIFKISSSEGRSKP. Residues 238–258 traverse the membrane as a helical segment; it reads SSTCSARLTVVITFCGTIFLM. Topologically, residues 259 to 277 are extracellular; that stretch reads YMKPKSQETLNSDDLDATD. Residues 278–298 traverse the membrane as a helical segment; it reads KLIFIFYRVMTPMMNPLIYSL. The Cytoplasmic portion of the chain corresponds to 299–318; the sequence is RNKDVKEAVKHLLRRKNFNK.

The protein belongs to the G-protein coupled receptor 1 family.

The protein localises to the cell membrane. Functionally, odorant receptor. The sequence is that of Olfactory receptor 13C5 (OR13C5) from Homo sapiens (Human).